The following is a 176-amino-acid chain: MDASHPAVYPVGVPPTAVDPPPRVRMKDYEGMPSTLGGLVLRSGQFACAVTALSIMISIPDFSSVTAFCYLVAAMALQLLWSVSLAVVDGYALLLRRTLHNPVLLSLLVIGDWVTSTLSLAAACSSAGITVLIDSDLAQCAHNHCGRYEAAVAMAFLTWFLVSLSFFFSFWLLATR.

The Cytoplasmic portion of the chain corresponds to 1-45 (MDASHPAVYPVGVPPTAVDPPPRVRMKDYEGMPSTLGGLVLRSGQ). A helical transmembrane segment spans residues 46-66 (FACAVTALSIMISIPDFSSVT). A67 is a topological domain (extracellular). Residues 68–88 (FCYLVAAMALQLLWSVSLAVV) traverse the membrane as a helical segment. Residues 89-102 (DGYALLLRRTLHNP) are Cytoplasmic-facing. The chain crosses the membrane as a helical span at residues 103–123 (VLLSLLVIGDWVTSTLSLAAA). At 124–151 (CSSAGITVLIDSDLAQCAHNHCGRYEAA) the chain is on the extracellular side. A helical transmembrane segment spans residues 152–172 (VAMAFLTWFLVSLSFFFSFWL). The Cytoplasmic segment spans residues 173 to 176 (LATR).

It belongs to the Casparian strip membrane proteins (CASP) family. In terms of assembly, homodimer and heterodimers.

The protein resides in the cell membrane. The protein is CASP-like protein 5A1 of Selaginella moellendorffii (Spikemoss).